The primary structure comprises 83 residues: Protein kreg-1 (83 aa).

Positions 62–83 are disordered; the sequence is GHHHHHHGHHFGHHHHHHHGHH.

In terms of tissue distribution, weakly expressed in the intestine, but expression is up-regulated in response to Cu(2+).

Plays a role in the stress response to heavy metals such as copper, probably in a fos-1/kgb-1-dependent manner. The protein is Protein kreg-1 of Caenorhabditis elegans.